Reading from the N-terminus, the 163-residue chain is Small ribosomal subunit protein uS5 (163 aa).

An S5 DRBM domain is found at 8-71 (LIEKIVYLNR…EKARKEMISV (64 aa)).

Belongs to the universal ribosomal protein uS5 family. In terms of assembly, part of the 30S ribosomal subunit. Contacts proteins S4 and S8.

In terms of biological role, with S4 and S12 plays an important role in translational accuracy. Functionally, located at the back of the 30S subunit body where it stabilizes the conformation of the head with respect to the body. The polypeptide is Small ribosomal subunit protein uS5 (Maridesulfovibrio salexigens (strain ATCC 14822 / DSM 2638 / NCIMB 8403 / VKM B-1763) (Desulfovibrio salexigens)).